A 382-amino-acid chain; its full sequence is Lipid-A-disaccharide synthase (382 aa).

This sequence belongs to the LpxB family.

The catalysed reaction is a lipid X + a UDP-2-N,3-O-bis[(3R)-3-hydroxyacyl]-alpha-D-glucosamine = a lipid A disaccharide + UDP + H(+). It participates in bacterial outer membrane biogenesis; LPS lipid A biosynthesis. In terms of biological role, condensation of UDP-2,3-diacylglucosamine and 2,3-diacylglucosamine-1-phosphate to form lipid A disaccharide, a precursor of lipid A, a phosphorylated glycolipid that anchors the lipopolysaccharide to the outer membrane of the cell. In Alkalilimnicola ehrlichii (strain ATCC BAA-1101 / DSM 17681 / MLHE-1), this protein is Lipid-A-disaccharide synthase.